The chain runs to 346 residues: Phosphoribosylformylglycinamidine cyclo-ligase (346 aa).

Belongs to the AIR synthase family.

The protein resides in the cytoplasm. It carries out the reaction 2-formamido-N(1)-(5-O-phospho-beta-D-ribosyl)acetamidine + ATP = 5-amino-1-(5-phospho-beta-D-ribosyl)imidazole + ADP + phosphate + H(+). It functions in the pathway purine metabolism; IMP biosynthesis via de novo pathway; 5-amino-1-(5-phospho-D-ribosyl)imidazole from N(2)-formyl-N(1)-(5-phospho-D-ribosyl)glycinamide: step 2/2. This is Phosphoribosylformylglycinamidine cyclo-ligase from Brevibacillus brevis (strain 47 / JCM 6285 / NBRC 100599).